The chain runs to 362 residues: Probable secreted beta-glucosidase UTH1 (362 aa).

A signal peptide spans 1-17 (MKLSALLALSASTAVLA).

Belongs to the SUN family.

The protein localises to the mitochondrion outer membrane. The protein resides in the secreted. Its subcellular location is the cell wall. Involved in aging, oxidative stress response, and in the regulation of mitochondrial biogenesis. Inactivation of UTH1 increases life span, leads to higher resistance to heat stress and to hydrogen peroxide, and increases sensitivity to the superoxide radical-generating drug paraquat and to copper. Also required for the selective autophagic degradation of mitochondria (mitophagy) in response to nitrogen starvation. May play a role in cell wall morphogenesis and septation. Involved in the remodeling of the cell wall during the various phases of yeast culture development and under various environmental conditions and plays a role in septation. Involved in cell sensitivity to boric acid. The protein is Probable secreted beta-glucosidase UTH1 (UTH1) of Saccharomyces cerevisiae (strain YJM789) (Baker's yeast).